Reading from the N-terminus, the 208-residue chain is Large ribosomal subunit protein uL3 (208 aa).

Residues 124–146 are disordered; the sequence is HGQSRGPMAHGSRYHRRPGSMGP.

It belongs to the universal ribosomal protein uL3 family. In terms of assembly, part of the 50S ribosomal subunit. Forms a cluster with proteins L14 and L19.

One of the primary rRNA binding proteins, it binds directly near the 3'-end of the 23S rRNA, where it nucleates assembly of the 50S subunit. This is Large ribosomal subunit protein uL3 from Streptococcus thermophilus (strain ATCC BAA-491 / LMD-9).